The sequence spans 278 residues: Polyamine aminopropyltransferase (278 aa).

A PABS domain is found at 3-240 (EGWFTEAVED…GWWSATLMVN (238 aa)). An S-methyl-5'-thioadenosine-binding site is contributed by Gln33. The spermidine site is built by His64 and Asp88. Residues Glu108 and 139 to 140 (DG) each bind S-methyl-5'-thioadenosine. The active-site Proton acceptor is the Asp158. Residue 158-161 (DSTD) participates in spermidine binding. Pro165 serves as a coordination point for S-methyl-5'-thioadenosine.

The protein belongs to the spermidine/spermine synthase family. Homodimer or homotetramer.

The protein localises to the cytoplasm. It catalyses the reaction S-adenosyl 3-(methylsulfanyl)propylamine + putrescine = S-methyl-5'-thioadenosine + spermidine + H(+). Its pathway is amine and polyamine biosynthesis; spermidine biosynthesis; spermidine from putrescine: step 1/1. Functionally, catalyzes the irreversible transfer of a propylamine group from the amino donor S-adenosylmethioninamine (decarboxy-AdoMet) to putrescine (1,4-diaminobutane) to yield spermidine. This chain is Polyamine aminopropyltransferase, found in Halorhodospira halophila (strain DSM 244 / SL1) (Ectothiorhodospira halophila (strain DSM 244 / SL1)).